A 469-amino-acid chain; its full sequence is E3 ubiquitin-protein ligase pellino homolog 3 (469 aa).

The disordered stretch occupies residues 1–39; it reads MVLEGNPEVGSPRTSDLQHRGNKGSCVLSSPGEDAQPGE. At Ser11 the chain carries Phosphoserine.

The protein belongs to the pellino family. As to quaternary structure, interacts with TRAF6, MAP3K14 and MAP3K7. In terms of processing, phosphorylated by IRAK1 enhancing its E3 ligase activity. As to expression, highly expressed in brain, heart and testis, and at lower level in kidney, liver, lung, placenta, small intestine, spleen and stomach. Isoform 1 is not expressed in lung.

The catalysed reaction is S-ubiquitinyl-[E2 ubiquitin-conjugating enzyme]-L-cysteine + [acceptor protein]-L-lysine = [E2 ubiquitin-conjugating enzyme]-L-cysteine + N(6)-ubiquitinyl-[acceptor protein]-L-lysine.. It participates in protein modification; protein ubiquitination. Functionally, E3 ubiquitin ligase catalyzing the covalent attachment of ubiquitin moieties onto substrate proteins. Involved in the TLR and IL-1 signaling pathways via interaction with the complex containing IRAK kinases and TRAF6. Mediates 'Lys-63'-linked polyubiquitination of IRAK1. Can activate AP1/JUN and ELK1. Acts as a regulator of innate immunity by mediating 'Lys-63'-linked polyubiquitination of RIPK2 downstream of NOD1 and NOD2, thereby transforming RIPK2 into a scaffolding protein for downstream effectors, ultimately leading to activation of the NF-kappa-B and MAP kinases signaling. Catalyzes 'Lys-63'-linked polyubiquitination of RIPK2 in parallel of XIAP. This Homo sapiens (Human) protein is E3 ubiquitin-protein ligase pellino homolog 3.